Reading from the N-terminus, the 411-residue chain is Mitogen-activated protein kinase 8 (411 aa).

The region spanning 26–321 (YQNLKPIGSG…VDEALQHPYI (296 aa)) is the Protein kinase domain. ATP-binding positions include 32 to 40 (IGSGAQGIV) and Lys-55. Position 116 is an S-nitrosocysteine; in inhibited form (Cys-116). The Proton acceptor role is filled by Asp-151. At Thr-183 the chain carries Phosphothreonine; by MAP2K7. Residues 183–185 (TPY) carry the TXY motif. Tyr-185 carries the post-translational modification Phosphotyrosine; by MAP2K4. The interval 368–411 (KNGVIRGQPSPLGAAVINGSQHPVSSPSVNDMSSMSTDPTLASD) is disordered. Ser-377 bears the Phosphoserine mark. Positions 390–403 (PVSSPSVNDMSSMS) are enriched in low complexity.

Belongs to the protein kinase superfamily. CMGC Ser/Thr protein kinase family. MAP kinase subfamily. In terms of assembly, forms a complex with MAPK8IP1 and ARHGEF28. Found in a complex with SH3RF1, RAC1, MAP3K11/MLK3, MAP2K7/MKK7 and MAPK8IP1/JIP1. Found in a complex with SH3RF1, RAC2, MAP3K7/TAK1, MAP2K7/MKK7, MAPK8IP1/JIP1 and MAPK9/JNK2. Binds to at least four scaffolding proteins, MAPK8IP1/JIP-1, MAPK8IP2/JIP-2, MAPK8IP3/JIP-3/JSAP1 and SPAG9/MAPK8IP4/JIP-4. These proteins also bind other components of the JNK signaling pathway. Interacts with TP53, WWOX. Interacts with JAMP. Interacts with NFATC4. Interacts (phosphorylated form) with NFE2; the interaction phosphorylates NFE2 in undifferentiated cells. Interacts with MECOM; regulates JNK signaling. Interacts with PIN1; this interaction mediates MAPK8 conformational changes leading to the binding of MAPK8 to its substrates. Interacts with HSF1 (via D domain and preferentially with hyperphosphorylated form); this interaction occurs under both normal growth conditions and immediately upon heat shock. Interacts with STMN2, STMN3 and STMN4. Interacts with GRIPAP1. Interacts with POU5F1; phosphorylates POU5F1 at 'Ser-347'. Interacts with HSF4. Requires Mg(2+) as cofactor. Dually phosphorylated on Thr-183 and Tyr-185 by MAP2K7 and MAP2K4, which activates the enzyme. Phosphorylated by TAOK2. Phosphorylated form is more concentrated at synapses than none-phosphorylated. Post-translationally, nitrosylated upon IFN-gamma-induced endogenous NO production, which inhibits the enzyme. May be phosphorylated at Thr-183 and Tyr-185 by MAP3K1/MEKK1.

Its subcellular location is the cytoplasm. The protein localises to the nucleus. The protein resides in the synapse. The catalysed reaction is L-seryl-[protein] + ATP = O-phospho-L-seryl-[protein] + ADP + H(+). It carries out the reaction L-threonyl-[protein] + ATP = O-phospho-L-threonyl-[protein] + ADP + H(+). Its activity is regulated as follows. Activated by threonine and tyrosine phosphorylation by either of two dual specificity kinases, MAP2K4 and MAP2K7. MAP2K4 shows a strong preference for Tyr-185 while MAP2K7 phosphorylates Tyr-183 preferentially. Inhibited by dual specificity phosphatases, such as DUSP1. Inhibited by SERPINB3. Inhibited by IFN-gamma-induced S-nitrosylation. Serine/threonine-protein kinase involved in various processes such as cell proliferation, differentiation, migration, transformation and programmed cell death. Extracellular stimuli such as pro-inflammatory cytokines or physical stress stimulate the stress-activated protein kinase/c-Jun N-terminal kinase (SAP/JNK) signaling pathway. In this cascade, two dual specificity kinases MAP2K4/MKK4 and MAP2K7/MKK7 phosphorylate and activate MAPK8/JNK1. In turn, MAPK8/JNK1 phosphorylates a number of transcription factors, primarily components of AP-1 such as JUN, JDP2 and ATF2 and thus regulates AP-1 transcriptional activity. Phosphorylates the replication licensing factor CDT1, inhibiting the interaction between CDT1 and the histone H4 acetylase HBO1 to replication origins. Loss of this interaction abrogates the acetylation required for replication initiation. Promotes stressed cell apoptosis by phosphorylating key regulatory factors including p53/TP53 and Yes-associates protein YAP1. In T-cells, MAPK8 and MAPK9 are required for polarized differentiation of T-helper cells into Th1 cells. Contributes to the survival of erythroid cells by phosphorylating the antagonist of cell death BAD upon EPO stimulation. Mediates starvation-induced BCL2 phosphorylation, BCL2 dissociation from BECN1, and thus activation of autophagy. Phosphorylates STMN2 and hence regulates microtubule dynamics, controlling neurite elongation in cortical neurons. In the developing brain, through its cytoplasmic activity on STMN2, negatively regulates the rate of exit from multipolar stage and of radial migration from the ventricular zone. Phosphorylates several other substrates including heat shock factor protein 4 (HSF4), the deacetylase SIRT1, ELK1, or the E3 ligase ITCH. Phosphorylates the CLOCK-BMAL1 heterodimer and plays a role in the regulation of the circadian clock. Phosphorylates the heat shock transcription factor HSF1, suppressing HSF1-induced transcriptional activity. Phosphorylates POU5F1, which results in the inhibition of POU5F1's transcriptional activity and enhances its proteasomal degradation. Phosphorylates JUND and this phosphorylation is inhibited in the presence of MEN1. In neurons, phosphorylates SYT4 which captures neuronal dense core vesicles at synapses. Phosphorylates EIF4ENIF1/4-ET in response to oxidative stress, promoting P-body assembly. Phosphorylates SIRT6 in response to oxidative stress, stimulating its mono-ADP-ribosyltransferase activity. Phosphorylates NLRP3, promoting assembly of the NLRP3 inflammasome. Phosphorylates ALKBH5 in response to reactive oxygen species (ROS), promoting ALKBH5 sumoylation and inactivation. In Rattus norvegicus (Rat), this protein is Mitogen-activated protein kinase 8 (Mapk8).